A 159-amino-acid polypeptide reads, in one-letter code: 3-hydroxyacyl-[acyl-carrier-protein] dehydratase FabZ (159 aa).

The active site involves H62.

The protein belongs to the thioester dehydratase family. FabZ subfamily.

Its subcellular location is the cytoplasm. The enzyme catalyses a (3R)-hydroxyacyl-[ACP] = a (2E)-enoyl-[ACP] + H2O. Involved in unsaturated fatty acids biosynthesis. Catalyzes the dehydration of short chain beta-hydroxyacyl-ACPs and long chain saturated and unsaturated beta-hydroxyacyl-ACPs. This chain is 3-hydroxyacyl-[acyl-carrier-protein] dehydratase FabZ, found in Methylobacterium nodulans (strain LMG 21967 / CNCM I-2342 / ORS 2060).